Reading from the N-terminus, the 442-residue chain is Ribosomal protein uS12 methylthiotransferase RimO (442 aa).

The 117-residue stretch at 13 to 129 (RSIFLLSLGC…ILNILGTAYD (117 aa)) folds into the MTTase N-terminal domain. Positions 22, 58, 92, 153, 157, and 160 each coordinate [4Fe-4S] cluster. A Radical SAM core domain is found at 139 to 369 (LSPSHYAWLK…MELQEGISEK (231 aa)). A TRAM domain is found at 372–439 (RALEEKALKV…AYELVGRIKN (68 aa)).

Belongs to the methylthiotransferase family. RimO subfamily. The cofactor is [4Fe-4S] cluster.

Its subcellular location is the cytoplasm. The enzyme catalyses L-aspartate(89)-[ribosomal protein uS12]-hydrogen + (sulfur carrier)-SH + AH2 + 2 S-adenosyl-L-methionine = 3-methylsulfanyl-L-aspartate(89)-[ribosomal protein uS12]-hydrogen + (sulfur carrier)-H + 5'-deoxyadenosine + L-methionine + A + S-adenosyl-L-homocysteine + 2 H(+). Functionally, catalyzes the methylthiolation of an aspartic acid residue of ribosomal protein uS12. The polypeptide is Ribosomal protein uS12 methylthiotransferase RimO (Chlorobium phaeobacteroides (strain BS1)).